The sequence spans 292 residues: ATP synthase gamma chain (292 aa).

It belongs to the ATPase gamma chain family. In terms of assembly, F-type ATPases have 2 components, CF(1) - the catalytic core - and CF(0) - the membrane proton channel. CF(1) has five subunits: alpha(3), beta(3), gamma(1), delta(1), epsilon(1). CF(0) has three main subunits: a, b and c.

It localises to the cell inner membrane. Its function is as follows. Produces ATP from ADP in the presence of a proton gradient across the membrane. The gamma chain is believed to be important in regulating ATPase activity and the flow of protons through the CF(0) complex. The chain is ATP synthase gamma chain from Hydrogenobaculum sp. (strain Y04AAS1).